The primary structure comprises 361 residues: N-methyltransferase benX (361 aa).

The protein belongs to the methyltransferase superfamily.

It participates in secondary metabolite biosynthesis. Its function is as follows. N-methyltransferase; part of the gene cluster that mediates the biosynthesis of benzomalvin A and D. The pathway begins with the loading of amino acid precursors onto the A domains of the non ribosomal peptide synthetases benY and benZ. BenY and the A1 domain of benZ are loaded with anthranilate (Anth), while the A2 domain of benZ is loaded with phenylalanine (Phe). N-methylation of Phe by the methyltransferase benX may happen before loading of Phe onto benZ, after loading of Phe, or after dipeptide formation. Condensation of Anth with the secondary amine of NmPhe or Phe is catalyzed by the C1 domain of benZ, forming a dipeptide intermediate. This is followed by in trans condensation of the Anth-NmPhe dipeptide with Anth bound to the T domain of benY by the C2 domain of benZ to form the linear tripeptide Anth-NmPhe-Anth. Cyclization and release of the tripeptide is then catalyzed by the C-terminal C domain of benY and the resulting 11-member macrocyclic intermediate is expected to spontaneously collapse to form the benzodiazepine core. Benzomalvin A is in conformational equilibrium with its atropisomer, benzomalvin D. The protein is N-methyltransferase benX of Aspergillus terreus.